The following is a 610-amino-acid chain: Elongation factor 4 (610 aa).

Residues 15–197 form the tr-type G domain; sequence KSIRNFSIIA…RIINDIPYPK (183 aa). Residues 27 to 32 and 144 to 147 each bind GTP; these read DHGKST and NKID.

The protein belongs to the TRAFAC class translation factor GTPase superfamily. Classic translation factor GTPase family. LepA subfamily.

The protein resides in the cell membrane. The enzyme catalyses GTP + H2O = GDP + phosphate + H(+). Required for accurate and efficient protein synthesis under certain stress conditions. May act as a fidelity factor of the translation reaction, by catalyzing a one-codon backward translocation of tRNAs on improperly translocated ribosomes. Back-translocation proceeds from a post-translocation (POST) complex to a pre-translocation (PRE) complex, thus giving elongation factor G a second chance to translocate the tRNAs correctly. Binds to ribosomes in a GTP-dependent manner. This is Elongation factor 4 from Buchnera aphidicola subsp. Acyrthosiphon pisum (strain 5A).